Consider the following 104-residue polypeptide: Ribonuclease P protein component 4 (104 aa).

The Zn(2+) site is built by C63, C66, C89, and C92.

It belongs to the eukaryotic/archaeal RNase P protein component 4 family. In terms of assembly, consists of a catalytic RNA component and at least 4-5 protein subunits. It depends on Zn(2+) as a cofactor.

It localises to the cytoplasm. The enzyme catalyses Endonucleolytic cleavage of RNA, removing 5'-extranucleotides from tRNA precursor.. Part of ribonuclease P, a protein complex that generates mature tRNA molecules by cleaving their 5'-ends. In Methanosphaera stadtmanae (strain ATCC 43021 / DSM 3091 / JCM 11832 / MCB-3), this protein is Ribonuclease P protein component 4.